Consider the following 422-residue polypeptide: Serine/threonine-protein kinase H1 homolog (422 aa).

A disordered region spans residues phenylalanine 35 to lysine 80. Over residues glycine 46–glutamine 62 the composition is skewed to polar residues. Residues tyrosine 96–isoleucine 353 enclose the Protein kinase domain. Residues isoleucine 102–valine 110 and lysine 125 each bind ATP. Aspartate 216 functions as the Proton acceptor in the catalytic mechanism. The interval arginine 376–glycine 422 is disordered. Residues threonine 384–threonine 396 show a composition bias toward low complexity. Over residues arginine 405–arginine 414 the composition is skewed to basic and acidic residues.

It belongs to the protein kinase superfamily. CAMK Ser/Thr protein kinase family.

It catalyses the reaction L-seryl-[protein] + ATP = O-phospho-L-seryl-[protein] + ADP + H(+). The catalysed reaction is L-threonyl-[protein] + ATP = O-phospho-L-threonyl-[protein] + ADP + H(+). In Danio rerio (Zebrafish), this protein is Serine/threonine-protein kinase H1 homolog (pskh1).